Consider the following 26-residue polypeptide: Melittin (26 aa).

Gly1 carries the N-formylglycine; partial modification. A Glutamic acid 1-amide modification is found at Glu26.

This sequence belongs to the melittin family. In terms of assembly, monomer (in solution and for integration into membranes), homotetramer (in solution and potentially as a toroidal pore in membranes), and potenially homomultimer (as a toroidal pore in membranes). As to expression, expressed by the venom gland.

The protein localises to the secreted. It localises to the target cell membrane. Main toxin of bee venom with strong hemolytic activity and antimicrobial activity. It has enhancing effects on bee venom phospholipase A2 activity. This amphipathic toxin binds to negatively charged membrane surface and forms pore by inserting into lipid bilayers inducing the leakage of ions and molecules and the enhancement of permeability that ultimately leads to cell lysis. It acts as a voltage-gated pore with higher selectivity for anions over cations. The ion conductance has been shown to be voltage-dependent. Self-association of melittin in membranes is promoted by high ionic strength, but not by the presence of negatively charged lipids. In vivo, intradermal injection into healthy human volunteers produce sharp pain sensation and an inflammatory response. It produces pain by activating primary nociceptor cells directly and indirectly due to its ability to activate plasma membrane phospholipase A2 and its pore-forming activity. The polypeptide is Melittin (MELT) (Apis dorsata (Giant honeybee)).